A 528-amino-acid chain; its full sequence is Protein spinster homolog 1 (528 aa).

The disordered stretch occupies residues 1-44; it reads MSGSDTAPFLSQADDTDDGPAPGTPGLPGSMGNPKSEDPAVPDQ. Transmembrane regions (helical) follow at residues 50 to 70, 98 to 118, 126 to 146, 160 to 180, 187 to 207, 218 to 238, 278 to 298, 323 to 343, 357 to 377, 381 to 401, 421 to 441, and 465 to 485; these read ITGLSSGHSALIVAVLCYINL, GLIQTVFISSYMVLAPVFGYL, YLMCGGIAFWSLVTLGSSFIP, VGVGEASYSTIAPTLIADLFV, MLSVFYFAIPVGSGLGYIAGS, WALRVTPGLGVLAVVLLFLVV, LGFTAVAFVTGSLALWAPAFL, LIFGLITCLTGVLGVGLGVEI, LVCAAGLLGSAPFLFLALACA, IVATYIFIFIGETLLSMNWAI, FQIVLSHLLGDAGSPYLIGSI, and MLCAFVGALGGAAFLGTAIFI. Phosphoserine is present on serine 518.

The protein belongs to the major facilitator superfamily. Spinster (TC 2.A.1.49) family. Interacts with BCL2 and BCL2L1.

The protein resides in the lysosome membrane. The catalysed reaction is a 1-acyl-sn-glycero-3-phosphocholine(out) + H(+)(out) = a 1-acyl-sn-glycero-3-phosphocholine(in) + H(+)(in). The enzyme catalyses 1-hexadecanoyl-sn-glycero-3-phosphocholine(out) + H(+)(out) = 1-hexadecanoyl-sn-glycero-3-phosphocholine(in) + H(+)(in). It carries out the reaction 1-(9Z-octadecenoyl)-sn-glycero-3-phosphocholine(out) + H(+)(out) = 1-(9Z-octadecenoyl)-sn-glycero-3-phosphocholine(in) + H(+)(in). It catalyses the reaction 1-(5Z,8Z,11Z,14Z-eicosatetraenoyl)-sn-glycero-3-phosphocholine(out) + H(+)(out) = 1-(5Z,8Z,11Z,14Z-eicosatetraenoyl)-sn-glycero-3-phosphocholine(in) + H(+)(in). The catalysed reaction is 1-(4Z,7Z,10Z,13Z,16Z,19Z-docosahexaenoyl)-sn-glycero-3-phosphocholine(out) + H(+)(out) = 1-(4Z,7Z,10Z,13Z,16Z,19Z-docosahexaenoyl)-sn-glycero-3-phosphocholine(in) + H(+)(in). The enzyme catalyses a 1-acyl-sn-glycero-3-phosphoethanolamine(out) + H(+)(out) = a 1-acyl-sn-glycero-3-phosphoethanolamine(in) + H(+)(in). It carries out the reaction 1-(9Z-octadecenoyl)-sn-glycero-3-phosphoethanolamine(out) + H(+)(out) = 1-(9Z-octadecenoyl)-sn-glycero-3-phosphoethanolamine(in) + H(+)(in). It catalyses the reaction 1-acyl-sn-glycero-3-phospho-(1'-sn-glycerol)(out) + H(+)(out) = 1-acyl-sn-glycero-3-phospho-(1'-sn-glycerol)(in) + H(+)(in). The catalysed reaction is 1-(9Z-octadecenoyl)-sn-glycero-3-phospho-(1'-sn-glycerol)(out) + H(+)(out) = 1-(9Z-octadecenoyl)-sn-glycero-3-phospho-(1'-sn-glycerol)(in) + H(+)(in). The enzyme catalyses a 1-O-(1Z-alkenyl)-sn-glycero-3-phosphocholine(out) + H(+)(out) = a 1-O-(1Z-alkenyl)-sn-glycero-3-phosphocholine(in) + H(+)(in). It carries out the reaction 1-(1Z-hexadecenyl)-sn-glycero-3-phosphocholine(out) + H(+)(out) = 1-(1Z-hexadecenyl)-sn-glycero-3-phosphocholine(in) + H(+)(in). It catalyses the reaction a 1-O-(1Z-alkenyl)-sn-glycero-3-phosphoethanolamine(out) + H(+)(out) = a 1-O-(1Z-alkenyl)-sn-glycero-3-phosphoethanolamine(in) + H(+)(in). The catalysed reaction is 1-O-(1Z-hexadecenyl)-sn-glycero-3-phosphoethanolamine(out) + H(+)(out) = 1-O-(1Z-hexadecenyl)-sn-glycero-3-phosphoethanolamine(in) + H(+)(in). In terms of biological role, plays a critical role in the phospholipid salvage pathway from lysosomes to the cytosol. Mediates the rate-limiting, proton-dependent, lysosomal efflux of lysophospholipids, which can then be reacylated by acyltransferases in the endoplasmic reticulum to form phospholipids. Selective for zwitterionic headgroups such as lysophosphatidylcholine (LPC) and lysophosphatidylethanolamine (LPE), can also transport lysophosphatidylglycerol (LPG), but not other anionic lysophospholipids, sphingosine, nor sphingomyelin. Transports lysophospholipids with saturated, monounsaturated, and polyunsaturated fatty acids, such as 1-hexadecanoyl-sn-glycero-3-phosphocholine, 1-(9Z-octadecenoyl)-sn-glycero-3-phosphocholine and 1-(4Z,7Z,10Z,13Z,16Z,19Z-docosahexaenoyl)-sn-glycero-3-phosphocholine, respectively. Can also transport lysoplasmalogen (LPC with a fatty alcohol) such as 1-(1Z-hexadecenyl)-sn-glycero-3-phosphocholine. Essential player in lysosomal homeostasis. Crucial for cell survival under conditions of nutrient limitation. May be involved in necrotic or autophagic cell death. In Bos taurus (Bovine), this protein is Protein spinster homolog 1 (SPNS1).